Here is a 197-residue protein sequence, read N- to C-terminus: Imidazoleglycerol-phosphate dehydratase (197 aa).

This sequence belongs to the imidazoleglycerol-phosphate dehydratase family.

It localises to the cytoplasm. The enzyme catalyses D-erythro-1-(imidazol-4-yl)glycerol 3-phosphate = 3-(imidazol-4-yl)-2-oxopropyl phosphate + H2O. It participates in amino-acid biosynthesis; L-histidine biosynthesis; L-histidine from 5-phospho-alpha-D-ribose 1-diphosphate: step 6/9. The chain is Imidazoleglycerol-phosphate dehydratase from Laribacter hongkongensis (strain HLHK9).